Consider the following 285-residue polypeptide: Extracellular metalloprotease SMAC_06893 (285 aa).

The first 18 residues, 1 to 18 (MQIKSLLLAAAAAPAALG), serve as a signal peptide directing secretion. Residue histidine 197 coordinates Zn(2+). Glutamate 198 is a catalytic residue. Histidine 201 is a Zn(2+) binding site. Cysteines 233 and 260 form a disulfide. Asparagine 282 carries an N-linked (GlcNAc...) asparagine glycan.

The protein belongs to the peptidase M43B family.

The protein resides in the secreted. In terms of biological role, secreted metalloproteinase that allows assimilation of proteinaceous substrates. The sequence is that of Extracellular metalloprotease SMAC_06893 from Sordaria macrospora (strain ATCC MYA-333 / DSM 997 / K(L3346) / K-hell).